Consider the following 316-residue polypeptide: MDTIKIFNHGEFDTIRNELVNLLKVVKWNTINSNVTVSSTDTIDISDCIREILYKQFKNVRNIEVSSDISFIKYNRFNDTTITDDNMGYYLVIYLNRTKSLKTLIYPTLETVISSSDDIMFSKSLNFRFENTKREYKLVMCSISLIYKPSICRIQYDNNKYIDISDSQEGNNLCYCVITMDPHHLIDLETMCVLVDKSGKCLLVNEFYIRFRKNHIYNSFVDICMDHIFELPNTKELFTLCNDDGRNIAWDNDKLESGNNTWIPKTDDEYMFLSKLMNIAKFNNTKFDYYVLVGDTDPCTVFTFKVTKYYININYE.

This sequence belongs to the poxviridae OPG031 family.

The protein localises to the host cytoplasm. It localises to the host nucleus. Its function is as follows. Plays a role in the inhibition of host NF-kappa-B activation. Mechanistically, blocks the subunit p65/RELA translocation into the host nucleus. This Monkeypox virus protein is protein OPG031 (OPG031).